The following is a 293-amino-acid chain: MTNKYIGRFAPSPSGPLHAGSLVAAMASYLDAKAHQGQWLVRIEDIDETRTVADATTAIMDALAVFGMQHDGEVVVQSQRKDLYQAAFERLKDLVYPCGCTRREIADSRLGVAADGAAIYPGTCRHGLAAGKTARTWRVRVPDANENNEAINFDDRWLGPLTQHLASEVGDFVLKRADGFWAYQLAVVVDDADQEVTHIVRGTDLLESTGRQIYLQRMLGFPTPHYMHVPVVLNDVGEKLSKQTGALALDLAHPMDELMKAARFLELSLPPVNSITEFWRVAIAAWARRFAQE.

L-glutamate is bound by residues 8-12 (RFAPS) and glutamate 44. Positions 11–21 (PSPSGPLHAGS) match the 'HIGH' region motif. Zn(2+) contacts are provided by cysteine 98, cysteine 100, tyrosine 120, and cysteine 124. Residues tyrosine 183 and arginine 201 each contribute to the L-glutamate site. Positions 239–243 (KLSKQ) match the 'KMSKS' region motif. ATP is bound at residue lysine 242.

This sequence belongs to the class-I aminoacyl-tRNA synthetase family. GluQ subfamily. Zn(2+) serves as cofactor.

In terms of biological role, catalyzes the tRNA-independent activation of glutamate in presence of ATP and the subsequent transfer of glutamate onto a tRNA(Asp). Glutamate is transferred on the 2-amino-5-(4,5-dihydroxy-2-cyclopenten-1-yl) moiety of the queuosine in the wobble position of the QUC anticodon. The polypeptide is Glutamyl-Q tRNA(Asp) synthetase (Janthinobacterium sp. (strain Marseille) (Minibacterium massiliensis)).